The primary structure comprises 416 residues: Hepatic and glial cell adhesion molecule (416 aa).

Positions 1–33 (MKRERGALSRASRALRLAPFVYLLLIQTDPLEG) are cleaved as a signal peptide. In terms of domain architecture, Ig-like V-type spans 34 to 142 (VNITSPVRLI…GEKTINLTVD (109 aa)). The Extracellular portion of the chain corresponds to 34 to 240 (VNITSPVRLI…VKITVYRRSS (207 aa)). N-linked (GlcNAc...) asparagine glycans are attached at residues Asn-35, Asn-138, Asn-167, and Asn-189. Positions 148 to 234 (PQVLVASTTV…QGRSLPVKIT (87 aa)) constitute an Ig-like C2-type domain. A disulfide bridge connects residues Cys-168 and Cys-217. Residues 241–261 (LYIILSTGGIFLLVTLVTVCA) traverse the membrane as a helical segment. Residues 262–416 (CWKPSKRKQK…DEAGPVEISA (155 aa)) are Cytoplasmic-facing. The interval 273–416 (LEKQNSLEYM…DEAGPVEISA (144 aa)) is disordered. Residue Ser-278 is modified to Phosphoserine. A compositionally biased stretch (basic and acidic residues) spans 285–306 (NDDRLKPEADTLPRSGEQERKN). Phosphoserine occurs at positions 350 and 377. A compositionally biased stretch (low complexity) spans 383-398 (SSPGRSRSASRTLRTA).

Homodimer. Dimer formation occurs predominantly through cis interactions on the cell surface. Part of a complex containing MLC1, TRPV4, AQP4 and ATP1B1. Interacts with CLCN2. N-glycosylated.

It localises to the cytoplasm. The protein resides in the cell membrane. Functionally, involved in regulating cell motility and cell-matrix interactions. May inhibit cell growth through suppression of cell proliferation. In glia, associates and targets CLCN2 at astrocytic processes and myelinated fiber tracts where it may regulate transcellular chloride flux involved in neuron excitability. The protein is Hepatic and glial cell adhesion molecule of Homo sapiens (Human).